Consider the following 145-residue polypeptide: Large ribosomal subunit protein uL16 (145 aa).

The span at 1–17 (MLMPKRVKHRRVHRGRM) shows a compositional bias: basic residues. The tract at residues 1–22 (MLMPKRVKHRRVHRGRMTGKAT) is disordered.

Belongs to the universal ribosomal protein uL16 family. In terms of assembly, part of the 50S ribosomal subunit.

Functionally, binds 23S rRNA and is also seen to make contacts with the A and possibly P site tRNAs. The chain is Large ribosomal subunit protein uL16 from Ruminiclostridium cellulolyticum (strain ATCC 35319 / DSM 5812 / JCM 6584 / H10) (Clostridium cellulolyticum).